Consider the following 492-residue polypeptide: MKIDMRNISKSFGTNKVLEKIDLELQSGQIHALMGENGAGKSTLMNILTGLFPASTGTIYIDGEERTFSNPQEAEEFGISFIHQEMNTWPEMTVLENLFLGREIKTTFGLLNQKLMRQKALETFKRLGVTIPLDIPIGNLSVGQQQMIEIAKSLLNQLSILVMDEPTAALTDRETENLFRVIRGLKQEGVGVVYISHRMEEIFKITDFVTVMRDGVIVDTKETSLTNSDELVKKMVGRKLEDYYPEKHSEIGPVAFEVSNLCGDNFEDVSFYVRKGEILGFSGLMGAGRTEVMRTIFGIDKKKSGKVKIDDQEITITTPSQAIKQGIGFLTENRKDEGLILDFNIKDNMTLPSTKDFSKHGFFDEKTSTTFVQQLINRLYIKSGRPDLEVGNLSGGNQQKVVLAKWIGIAPKVLILDEPTRGVDVGAKREIYQLMNELADRGVPIVMVSSDLPEILGVSDRIMVMHEGRISGELSRKEADQEKVMQLATGGK.

ABC transporter domains lie at 3–239 (IDMR…VGRK) and 238–492 (RKLE…TGGK). 35 to 42 (GENGAGKS) is a binding site for ATP.

It belongs to the ABC transporter superfamily. Ribose importer (TC 3.A.1.2.1) family. The complex is composed of an ATP-binding protein (RbsA), two transmembrane proteins (RbsC) and a solute-binding protein (RbsB).

Its subcellular location is the cell membrane. The enzyme catalyses D-ribose(out) + ATP + H2O = D-ribose(in) + ADP + phosphate + H(+). Part of the ABC transporter complex RbsABC involved in ribose import. Responsible for energy coupling to the transport system. The chain is Ribose import ATP-binding protein RbsA from Streptococcus agalactiae serotype V (strain ATCC BAA-611 / 2603 V/R).